We begin with the raw amino-acid sequence, 464 residues long: Protein FAM90A22 (464 aa).

Disordered stretches follow at residues 1–43, 70–389, and 415–437; these read MMAR…PRLK, PATL…HDGA, and HSPE…SEAP. Basic and acidic residues-rich tracts occupy residues 74–89 and 97–114; these read GKKE…KPRA and NKDK…DPQR. The span at 182 to 197 shows a compositional bias: low complexity; sequence SLSPLRKTSLSSSSSL.

It belongs to the FAM90 family.

This is Protein FAM90A22 from Homo sapiens (Human).